We begin with the raw amino-acid sequence, 531 residues long: Zinc finger C2HC domain-containing protein 1C (531 aa).

A disordered region spans residues 16 to 45 (MLPHNTTEAPGPHSAKQDSYEQSDSSQQSL). Over residues 35 to 44 (YEQSDSSQQS) the composition is skewed to low complexity. Residues 209-264 (VQIRRLEAAGESLEEEIRRKQILLRGKLKKTEEELRRIQTQKEQAKENENRELQKI) adopt a coiled-coil conformation. 2 disordered regions span residues 290-318 (FEEE…QLSD) and 334-387 (NKIR…PQLG). Basic and acidic residues predominate over residues 293–305 (EFSRDKREDETWE). Over residues 306–315 (RSQQNSSPFQ) the composition is skewed to polar residues. Basic and acidic residues predominate over residues 335-345 (KIRDRVSEPSM). Residues 366–380 (SSLSMAPDSSGSSGS) show a composition bias toward low complexity. 2 C2HC/C3H-type zinc fingers span residues 385-414 (QLGE…MQGS) and 493-522 (DYIQ…IKNR). Positions 389, 392, 404, 408, 497, 500, 512, and 516 each coordinate Zn(2+).

The protein belongs to the ZC2HC1 family. It depends on Zn(2+) as a cofactor.

In Macaca fascicularis (Crab-eating macaque), this protein is Zinc finger C2HC domain-containing protein 1C (ZC2HC1C).